A 331-amino-acid polypeptide reads, in one-letter code: 4-hydroxythreonine-4-phosphate dehydrogenase (331 aa).

2 residues coordinate substrate: His-137 and Thr-138. Residues His-167, His-212, and His-267 each coordinate a divalent metal cation. Substrate-binding residues include Lys-275, Asn-284, and Arg-293.

The protein belongs to the PdxA family. As to quaternary structure, homodimer. It depends on Zn(2+) as a cofactor. The cofactor is Mg(2+). Requires Co(2+) as cofactor.

It is found in the cytoplasm. It carries out the reaction 4-(phosphooxy)-L-threonine + NAD(+) = 3-amino-2-oxopropyl phosphate + CO2 + NADH. It participates in cofactor biosynthesis; pyridoxine 5'-phosphate biosynthesis; pyridoxine 5'-phosphate from D-erythrose 4-phosphate: step 4/5. Catalyzes the NAD(P)-dependent oxidation of 4-(phosphooxy)-L-threonine (HTP) into 2-amino-3-oxo-4-(phosphooxy)butyric acid which spontaneously decarboxylates to form 3-amino-2-oxopropyl phosphate (AHAP). This chain is 4-hydroxythreonine-4-phosphate dehydrogenase, found in Yersinia pseudotuberculosis serotype I (strain IP32953).